Here is a 262-residue protein sequence, read N- to C-terminus: Small ribosomal subunit protein eS1 (262 aa).

A compositionally biased stretch (basic and acidic residues) spans 234 to 251 (DPKEDSGKNVKSLPESKE). The disordered stretch occupies residues 234–262 (DPKEDSGKNVKSLPESKEATNILTAELKH).

The protein belongs to the eukaryotic ribosomal protein eS1 family. In terms of assembly, component of the small ribosomal subunit. Mature ribosomes consist of a small (40S) and a large (60S) subunit. The 40S subunit contains about 33 different proteins and 1 molecule of RNA (18S). The 60S subunit contains about 49 different proteins and 3 molecules of RNA (25S, 5.8S and 5S).

The protein localises to the cytoplasm. The protein is Small ribosomal subunit protein eS1 of Plasmodium yoelii yoelii.